Reading from the N-terminus, the 918-residue chain is MSLVSQNSRRRRGGRANARRNNGKGHPAAVPGPDVPRDRNDPKILQGLRASEGPGTSMLPTPREGPSASVPPTASEGSSAPRQFIISQGPNTSEMPTSRKGRGASRPPAVSAGLNTAMSITASEGPNSPVPPTAPKGSKAYEHLPVSEGLAISEQRHSDGGPNMEPTLGEGPGISVPPTFSEESGISDEGLSIFMSPNISEGPGINEPYSVSEDPSTSVPPTDSNGLGINLPPTFGEGLSISMLFSALEEPDIFAPPPSAEGLFASMSPPSGEIQSSWVSPIIMEGCNVNVPPTSKKGLRTSVPSAACESPSTSAEGLSSSLSSISAEGFCSSLAPCAAEGSCELLPCGEGRSTSELHCLGEGSSTSQMSLAAEGPSASGMPTEANNPEEALSCCASERRNKSTSRALQKAKDPSVRPKREDRFLDFQVLRDSKNSNSITIMGLGTSRVALTLKPQDPMEQNVAELLQFLLLKDQTKYPIKESDMREFIDKDYRHQFPEILRRAAVHLECIFRFELKELDTEEHIYILLNKLGPVPFEGLEDVPNGPKMGLLMMILGHILLNGNQAREADIWEMLWRFGVQRERRLSVFGNVKRLLSVEFVWQRYLDYRPLTDCVPVEYEFYWGPRSRAETTKMKILKFMAKIYNKDPMDWPALYNEALEEDADRVVVNNFRVARPFRRPLFAEVAPELDASGSKYSPHSWPESRLESKARKLVQLFLLMDSTKLPIPKKGILYYIGRECTKVFPDLLNRAARTLNHVYGTELVVLDPRNHSYTLYNRREMEDTEEIMDSPNRPGNNFLMQVLSFIFIMGNHARESAVWAFLRGLGVQNGRKHVITCRYLSQRYLDSLRVPDSDPVQYDFVWGPRARLETSKMKALRYVARIHRKEPEDWPEQYREAMEDEANRAEAGRRPLIVRNLR.

3 disordered regions span residues 1–140, 154–227, and 367–388; these read MSLV…GSKA, EQRH…SNGL, and SQMSLAAEGPSASGMPTEANNP. The span at 8-23 shows a compositional bias: basic residues; it reads SRRRRGGRANARRNNG. Polar residues-rich tracts occupy residues 70–96, 113–126, and 213–227; these read VPPTASEGSSAPRQFIISQGPNTSEMP, GLNTAMSITASEGP, and EDPSTSVPPTDSNGL. 2 MAGE domains span residues 459–658 and 706–897; these read MEQN…YNEA and LESK…YREA. The interval 704–918 is interaction with DTNA; the sequence is SRLESKARKL…RRPLIVRNLR (215 aa).

As to quaternary structure, interacts with DTNA. Interacts with TRIM28. Expressed in cell bodies and dendrites of hippocampal and Purkinje neurons. Also expressed in peripheral nerve, where it localizes to the perineurium and myelin (at protein level). Predominantly expressed in brain and at low levels in the heart, liver, kidney, spleen, testis, lung, thymus, placenta and skeletal muscle.

It is found in the cytoplasm. The protein localises to the perinuclear region. It localises to the nucleus. The protein resides in the cell membrane. Its function is as follows. May enhance ubiquitin ligase activity of RING-type zinc finger-containing E3 ubiquitin-protein ligases. Proposed to act through recruitment and/or stabilization of the Ubl-conjugating enzyme (E2) at the E3:substrate complex. This is Melanoma-associated antigen E1 (Magee1) from Mus musculus (Mouse).